Reading from the N-terminus, the 154-residue chain is UPF0178 protein GM21_2006 (154 aa).

Belongs to the UPF0178 family.

The protein is UPF0178 protein GM21_2006 of Geobacter sp. (strain M21).